Here is a 416-residue protein sequence, read N- to C-terminus: CinA-like protein (416 aa).

This sequence belongs to the CinA family.

In Rippkaea orientalis (strain PCC 8801 / RF-1) (Cyanothece sp. (strain PCC 8801)), this protein is CinA-like protein.